The following is a 1062-amino-acid chain: Histone H3-lysine(4) N-trimethyltransferase ATX1 (1062 aa).

Residues 159 to 184 are disordered; it reads NAFSGNKQNGSSRRKGSSSKNQDKAT. The region spanning 301–365 is the PWWP domain; the sequence is PGDIVWAKLA…VKQAISFIKG (65 aa). The tract at residues 401–424 is disordered; that stretch reads QLQKGADSVDSDMANSTEEGNSGG. The FYR N-terminal domain maps to 441–500; it reads DFRHIIGDLLIINLGKVVTDSQFFKDENHIWPEGYTAMRKFTSLTDHSASALYKMEVLRD. One can recognise an FYR C-terminal domain in the interval 504–586; the sequence is KTHPLFIVTA…RPSSHVSMCK (83 aa). A Phorbol-ester/DAG-type zinc finger spans residues 591-647; the sequence is RHQNQPTGYRPVRVDWKDLDKCNVCHMDEEYENNLFLQCDKCRMMVHAKCYGELEPC. Residues 599-1062 are interaction with PIP5; that stretch reads YRPVRVDWKD…RCDLIDWTAE (464 aa). Residues 609–660 form a PHD-type 1 zinc finger; the sequence is LDKCNVCHMDEEYENNLFLQCDKCRMMVHAKCYGELEPCDGALWLCNLCRPG. Residues 665–698 form a C2HC pre-PHD-type zinc finger; the sequence is PPRCCLCPVVGGAMKPTTDGRWAHLACAIWIPET. Residues 722 to 785 form a PHD-type 2 zinc finger; it reads LMCTICGVSY…RMLSFCKRHR (64 aa). The SET domain maps to 898–1016; the sequence is KRLAFGKSGI…KWEELTYDYR (119 aa). H908 contributes to the S-adenosyl-L-methionine binding site. The O-linked (GlcNAc) serine glycan is linked to S947. S-adenosyl-L-methionine is bound by residues Y954 and 977–978; that span reads NH. Positions 980, 1026, 1028, and 1033 each coordinate Zn(2+). The region spanning 1022-1038 is the Post-SET domain; it reads ERLSCSCGFPGCRGVVN.

It belongs to the class V-like SAM-binding methyltransferase superfamily. Histone-lysine methyltransferase family. TRX/MLL subfamily. In terms of assembly, interacts with PIP5. Interacts with WDR5A. Binds to CLF in the nucleus. Interacts with NRPB1 CTD domain, especially when NRPB1 is phosphorylated on 'Ser-5' of the heptapeptide repeat. Component of a nuclear protein complex containing at least TATA binding proteins (TBPs, e.g. TBP1 and TBP2) and ATX1. Associates with ULT1 for trimethylating 'Lys-4' on histone H3 (H3K4me3) at flower MADS box gene loci. Interacts with SEC. As to quaternary structure, interacts with A4/EF1A in the cytoplasm on the nuclear periphery. Activated via O-glycosylation by SEC; this modification triggers FLC locus H3K4me3 histone modification, thus preventing premature flowering. As to expression, strongly expressed in cotyledons, but weak levels in the first true leaves, except at the hydothodes. Ubiquitous with higher levels in dividing tissues, including inflorescence meristem and flower primordia. Expressed also in leaves (especially at hydathodes), in growing inflorescence stems and in the mature flowers. Strongly expressed in young seedlings.

Its subcellular location is the nucleus. It localises to the cytoplasm. The protein resides in the perinuclear region. It carries out the reaction L-lysyl(4)-[histone H3] + 3 S-adenosyl-L-methionine = N(6),N(6),N(6)-trimethyl-L-lysyl(4)-[histone H3] + 3 S-adenosyl-L-homocysteine + 3 H(+). The catalysed reaction is L-lysyl-[protein] + 3 S-adenosyl-L-methionine = N(6),N(6),N(6)-trimethyl-L-lysyl-[protein] + 3 S-adenosyl-L-homocysteine + 3 H(+). Binds to the promoter and regulates the transcription of target genes, maintaining them in an active state; at promoters, required for TATA binding proteins (TBPs, e.g. TBP1 and TBP2) and RNA polymerase II (Pol II) recruitment, and, in a subsequent event, is recruited by a phosphorylated form of Pol II to the +300-bp region of transcribed sequences to trimethylates nucleosomes. Histone trimethyltransferase that trimethylates 'Lys-4' of histone H3 (H3K4me3); H3 'Lys-4' methylation represents a specific tag for epigenetic transcriptional activation and is required for efficient elongation of transcription but not for transcription initiation. Methylates only a limited fraction of nucleosomes of target genes (e.g. FLC, NAP, XTH33 and WRKY70). Necessary for WDR5A occupancy at WRKY70 and LTP7 genes. Required to maintain the active state of class A (AP1 and AP2), class B (PI and AP3) and class C (AG, AGAMOUS) floral homeotic genes at early stages of flower development. Together with CLF, modulates AG nucleosome methylation statement. Involved in epigenetic regulation (e.g. H3K4me3) of the floral repressors FLC, FT and SOC1 to prevent the transition from vegetative to reproductive development, independently of the photoperiod; binds the active FLC locus before flowering, but this interaction is released upon the transition to flowering. Regulates floral organ identity and flowering transition. Functions as a receptor for the lipid messenger phosphatidylinositol 5-phosphate (PI5P), which negatively regulates its transcriptional activation activity. Exhibits histone methylase activity and subsequent transcriptional regulation on WRKY70 gene, and, to a lower extent on secondary defense-response targets salicylic acid (SA)-responsive gene PR1 and jasmonic acid (JA)-responsive gene THI2.1. Involved in response to dehydration stress-response in both abscisic acid (ABA)-dependent and ABA-independent pathways; this includes specific genes (e.g. COR15A, ADH1, CBF4, RD29A, RD29B, RD26, ABF3, NCED3 and ABA3) epigenetic regulation (e.g. H3K4me3 and Pol II recruitment) to promote their transcription and influence ABA production. Implicated in stomatal closure regulation. Indirect repressor of XTH genes (XTH33). Necessary for the phosphorylation of Pol II NRPB1 (e.g. Ser5P and Ser2P) at the promoters of target genes, thus regulating both early and late stages of transcription. Controls root growth and architecture by regulating the timing of root development, stem cell niche maintenance (e.g. quiescent center (QC)), and cell patterning during primary and lateral root development. Modulates cell cycle duration, cell production, and the transition from cell proliferation in the root apical meristem (RAM) to cell elongation. Its function is as follows. Trimethylates A4/EF1A post-translationally at Lys-396. Required for actin cytoskeleton organization. The polypeptide is Histone H3-lysine(4) N-trimethyltransferase ATX1 (Arabidopsis thaliana (Mouse-ear cress)).